The following is a 230-amino-acid chain: Ribose-5-phosphate isomerase A (230 aa).

Substrate contacts are provided by residues 32–35 (TGST), 85–88 (DGAD), and 98–101 (KGGG). Glu107 acts as the Proton acceptor in catalysis. Lys125 is a substrate binding site.

Belongs to the ribose 5-phosphate isomerase family. Homodimer.

The enzyme catalyses aldehydo-D-ribose 5-phosphate = D-ribulose 5-phosphate. It functions in the pathway carbohydrate degradation; pentose phosphate pathway; D-ribose 5-phosphate from D-ribulose 5-phosphate (non-oxidative stage): step 1/1. Functionally, catalyzes the reversible conversion of ribose-5-phosphate to ribulose 5-phosphate. In Burkholderia vietnamiensis (strain G4 / LMG 22486) (Burkholderia cepacia (strain R1808)), this protein is Ribose-5-phosphate isomerase A.